The chain runs to 193 residues: uncharacterized protein (193 aa).

The disordered stretch occupies residues 1-144 (MEKKRTLSVN…NNNNNNEGTI (144 aa)). Positions 29–86 (NSLNNIENNECNNNNNNNNNNNNNNSNSNNLNNSNNNNINTSSNSINSSNSINNSIDN) are enriched in low complexity. Residues 103–118 (KMNSSQEFQSYLTPNK) show a composition bias toward polar residues. Residues 119–140 (NNNNRNNNNRNNNNNNNNNNNN) show a composition bias toward low complexity. Residues 158-180 (YMIRPFLVGASASFGISIGMFYF) traverse the membrane as a helical segment.

Its subcellular location is the membrane. This is an uncharacterized protein from Dictyostelium discoideum (Social amoeba).